Consider the following 352-residue polypeptide: MIEADRLIAATGPRDREEVQDRAIRPLSLADYIGQPTVREQMELFIQAARGRSESLDHTLIFGPPGLGKTTLANIIAQEMGVSIKSTSGPVLERPGDLAALLTNLEPHDVLFIDEIHRLSPIVEEVLYPAMEDFQLDIMIGEGPAARSIKLDLPPFTLVGATTRAGMLTNPLRDRFGIVQRLEFYSTADLATIVSRSAGILGLPLDPEGAFEIARRARGTPRIANRLLRRVRDFAEVRAKGHITKAVADLALNLLDVDEHGFDHQDRRLLLTMIEKFDGGPVGVDSLAAAISEERHTIEDVLEPYLIQQGYIMRTPRGRVVTRHAYLHFGLNIPSRLGEMPVVDEFLDAVDD.

The interval 4–185 (ADRLIAATGP…FGIVQRLEFY (182 aa)) is large ATPase domain (RuvB-L). Residues isoleucine 24, arginine 25, glycine 66, lysine 69, threonine 70, threonine 71, 132-134 (EDF), arginine 175, tyrosine 185, and arginine 222 contribute to the ATP site. Residue threonine 70 coordinates Mg(2+). The interval 186-256 (STADLATIVS…VADLALNLLD (71 aa)) is small ATPAse domain (RuvB-S). The segment at 259 to 352 (EHGFDHQDRR…VDEFLDAVDD (94 aa)) is head domain (RuvB-H). 3 residues coordinate DNA: arginine 295, arginine 314, and arginine 319.

Belongs to the RuvB family. Homohexamer. Forms an RuvA(8)-RuvB(12)-Holliday junction (HJ) complex. HJ DNA is sandwiched between 2 RuvA tetramers; dsDNA enters through RuvA and exits via RuvB. An RuvB hexamer assembles on each DNA strand where it exits the tetramer. Each RuvB hexamer is contacted by two RuvA subunits (via domain III) on 2 adjacent RuvB subunits; this complex drives branch migration. In the full resolvosome a probable DNA-RuvA(4)-RuvB(12)-RuvC(2) complex forms which resolves the HJ.

Its subcellular location is the cytoplasm. The enzyme catalyses ATP + H2O = ADP + phosphate + H(+). The RuvA-RuvB-RuvC complex processes Holliday junction (HJ) DNA during genetic recombination and DNA repair, while the RuvA-RuvB complex plays an important role in the rescue of blocked DNA replication forks via replication fork reversal (RFR). RuvA specifically binds to HJ cruciform DNA, conferring on it an open structure. The RuvB hexamer acts as an ATP-dependent pump, pulling dsDNA into and through the RuvAB complex. RuvB forms 2 homohexamers on either side of HJ DNA bound by 1 or 2 RuvA tetramers; 4 subunits per hexamer contact DNA at a time. Coordinated motions by a converter formed by DNA-disengaged RuvB subunits stimulates ATP hydrolysis and nucleotide exchange. Immobilization of the converter enables RuvB to convert the ATP-contained energy into a lever motion, pulling 2 nucleotides of DNA out of the RuvA tetramer per ATP hydrolyzed, thus driving DNA branch migration. The RuvB motors rotate together with the DNA substrate, which together with the progressing nucleotide cycle form the mechanistic basis for DNA recombination by continuous HJ branch migration. Branch migration allows RuvC to scan DNA until it finds its consensus sequence, where it cleaves and resolves cruciform DNA. In Pseudomonas fluorescens (strain SBW25), this protein is Holliday junction branch migration complex subunit RuvB.